Consider the following 138-residue polypeptide: MKRNQVLFLTCAAAVVFLAVLHVGESAAVRSKDDPAPDKKESLKSKIFMQGSEASNFFKKRGKRSPKSQDEINAENRQRLSADERRREYYEEQRNEFENHVEEEQDEQEERSREQIEQWRQWHYDGLSPSYLYQRQNI.

Positions 1–26 (MKRNQVLFLTCAAAVVFLAVLHVGES) are cleaved as a signal peptide. A propeptide spans 28–64 (AVRSKDDPAPDKKESLKSKIFMQGSEASNFFKKRGKR) (ucma-N). A disordered region spans residues 58–116 (FKKRGKRSPKSQDEINAENRQRLSADERRREYYEEQRNEFENHVEEEQDEQEERSREQI). Positions 67-102 (KSQDEINAENRQRLSADERRREYYEEQRNEFENHVE) are enriched in basic and acidic residues. The stretch at 69 to 118 (QDEINAENRQRLSADERRREYYEEQRNEFENHVEEEQDEQEERSREQIEQ) forms a coiled coil. A 4-carboxyglutamate mark is found at glutamate 71, glutamate 75, glutamate 84, glutamate 88, glutamate 91, glutamate 92, glutamate 96, glutamate 98, glutamate 102, glutamate 103, glutamate 107, glutamate 110, glutamate 114, and glutamate 117.

It belongs to the UCMA family. Post-translationally, proteolytically cleaved by a furin-like convertase to generate a persistent C-terminal fragment found in almost the entire cartilage matrix, and affecting osteoblast differentiation. In terms of processing, sulfated on tyrosine residues.

Its subcellular location is the secreted. The protein localises to the extracellular space. It is found in the extracellular matrix. May be involved in the negative control of osteogenic differentiation of osteochondrogenic precursor cells in peripheral zones of fetal cartilage and at the cartilage-bone interface. The polypeptide is Unique cartilage matrix-associated protein (ucma) (Xenopus tropicalis (Western clawed frog)).